Here is a 127-residue protein sequence, read N- to C-terminus: Holo-[acyl-carrier-protein] synthase (127 aa).

Residues Asp-9 and Glu-58 each coordinate Mg(2+).

The protein belongs to the P-Pant transferase superfamily. AcpS family. The cofactor is Mg(2+).

It localises to the cytoplasm. The enzyme catalyses apo-[ACP] + CoA = holo-[ACP] + adenosine 3',5'-bisphosphate + H(+). In terms of biological role, transfers the 4'-phosphopantetheine moiety from coenzyme A to a Ser of acyl-carrier-protein. The chain is Holo-[acyl-carrier-protein] synthase from Shewanella baltica (strain OS223).